We begin with the raw amino-acid sequence, 283 residues long: Acetylglutamate kinase (283 aa).

Substrate is bound by residues 64-65 (GG), arginine 86, and asparagine 181.

Belongs to the acetylglutamate kinase family. ArgB subfamily.

The protein localises to the cytoplasm. The catalysed reaction is N-acetyl-L-glutamate + ATP = N-acetyl-L-glutamyl 5-phosphate + ADP. The protein operates within amino-acid biosynthesis; L-arginine biosynthesis; N(2)-acetyl-L-ornithine from L-glutamate: step 2/4. Catalyzes the ATP-dependent phosphorylation of N-acetyl-L-glutamate. This chain is Acetylglutamate kinase, found in Sulfurovum sp. (strain NBC37-1).